The primary structure comprises 431 residues: 4-hydroxy-3-methylbut-2-en-1-yl diphosphate synthase (flavodoxin) (431 aa).

Basic and acidic residues predominate over residues 1 to 12 (MNKLENPLRDDV). A disordered region spans residues 1–20 (MNKLENPLRDDVAGPAPRHQ). The [4Fe-4S] cluster site is built by C310, C313, C356, and E363.

The protein belongs to the IspG family. Requires [4Fe-4S] cluster as cofactor.

It catalyses the reaction (2E)-4-hydroxy-3-methylbut-2-enyl diphosphate + oxidized [flavodoxin] + H2O + 2 H(+) = 2-C-methyl-D-erythritol 2,4-cyclic diphosphate + reduced [flavodoxin]. The protein operates within isoprenoid biosynthesis; isopentenyl diphosphate biosynthesis via DXP pathway; isopentenyl diphosphate from 1-deoxy-D-xylulose 5-phosphate: step 5/6. Converts 2C-methyl-D-erythritol 2,4-cyclodiphosphate (ME-2,4cPP) into 1-hydroxy-2-methyl-2-(E)-butenyl 4-diphosphate. In Rhodopseudomonas palustris (strain TIE-1), this protein is 4-hydroxy-3-methylbut-2-en-1-yl diphosphate synthase (flavodoxin).